A 1663-amino-acid polypeptide reads, in one-letter code: Cortactin-binding protein 2 (1663 aa).

Disordered regions lie at residues 1–23 (MATD…AGAA), 203–222 (KKKT…RSTE), 367–440 (GASV…LHPG), 454–478 (GNAN…SPTS), and 498–614 (RFTS…LPPK). Positions 119–276 (KKMQERMSAQ…EQLKKGSDSK (158 aa)) form a coiled coil. A compositionally biased stretch (low complexity) spans 386–396 (PSTGSTSDPTS). Position 498 is an asymmetric dimethylarginine (Arg-498). A compositionally biased stretch (polar residues) spans 583–593 (TVASTPSSLPQ). 6 ANK repeats span residues 709 to 739 (GRPT…DINY), 743 to 772 (DGHS…QVNA), 776 to 805 (NGFT…NINH), 809 to 838 (GGQT…NRSV), 842 to 871 (DGWT…PAHG), and 912 to 942 (EGWT…EPER). The disordered stretch occupies residues 1448–1483 (KKGESGAWRKVNTSPRRKSGRFSLPTWNKPDLSTEG). Ser-1524 bears the Phosphoserine mark. The segment at 1560–1663 (DSSGNNPVLS…KNGHLEKPNK (104 aa)) is disordered. 2 stretches are compositionally biased toward polar residues: residues 1561–1574 (SSGN…TINN) and 1582–1599 (KEVS…SNSK). The segment covering 1624–1638 (SQNTKRSSSSSNTRQ) has biased composition (low complexity). The span at 1645–1663 (SKEENWNLHKNGHLEKPNK) shows a compositional bias: basic and acidic residues.

Interacts with CTTN/cortactin SH3 domain. Interacts with STRN, STRN4/zinedin and MOB4/phocein; this interactions mediate the association with the STRIPAK core complex and may regulate dendritic spine distribution of the STRIPAK complex in hippocampal neurons. Activation of glutamate receptors weakens the interaction with STRN and STRN4.

It is found in the cytoplasm. Its subcellular location is the cell cortex. The protein resides in the cell projection. It localises to the dendritic spine. Functionally, regulates the dendritic spine distribution of CTTN/cortactin in hippocampal neurons, and thus controls dendritic spinogenesis and dendritic spine maintenance. Associates with the striatin-interacting phosphatase and kinase (STRIPAK) core complex to regulate dendritic spine distribution of the STRIPAK complex in hippocampal neurons. The polypeptide is Cortactin-binding protein 2 (CTTNBP2) (Gorilla gorilla gorilla (Western lowland gorilla)).